A 118-amino-acid chain; its full sequence is MRLMDRLMVKLDGLTKQQKLENITKALLSANNKELANIIRNVIDNNDKDKVFIVNAAINLGLSPDYMLMNCYYLLDYAIMKNDIPVIVTLIEKGANINRRKYSDCSHLHLCAQDIIMY.

The ANK repeat unit spans residues 70 to 99 (NCYYLLDYAIMKNDIPVIVTLIEKGANINR).

In Acanthamoeba polyphaga (Amoeba), this protein is Putative ankyrin repeat protein R747.